The primary structure comprises 313 residues: Dimethyladenosine transferase (313 aa).

The disordered stretch occupies residues 1–21 (MPKVKSGAIGRRRGRQEQRRE). S-adenosyl-L-methionine is bound by residues His37, Leu39, Gly64, Glu85, Asp113, and Asn128.

It belongs to the class I-like SAM-binding methyltransferase superfamily. rRNA adenine N(6)-methyltransferase family. Part of the small subunit (SSU) processome, composed of more than 70 proteins and the RNA chaperone small nucleolar RNA (snoRNA) U3.

The protein localises to the nucleus. It localises to the nucleoplasm. Its subcellular location is the nucleolus. It catalyses the reaction adenosine(1779)/adenosine(1780) in 18S rRNA + 4 S-adenosyl-L-methionine = N(6)-dimethyladenosine(1779)/N(6)-dimethyladenosine(1780) in 18S rRNA + 4 S-adenosyl-L-homocysteine + 4 H(+). Specifically dimethylates two adjacent adenosines in the loop of a conserved hairpin near the 3'-end of 18S rRNA in the 40S particle. Involved in the pre-rRNA processing steps leading to small-subunit rRNA production independently of its RNA-modifying catalytic activity. Part of the small subunit (SSU) processome, first precursor of the small eukaryotic ribosomal subunit. During the assembly of the SSU processome in the nucleolus, many ribosome biogenesis factors, an RNA chaperone and ribosomal proteins associate with the nascent pre-rRNA and work in concert to generate RNA folding, modifications, rearrangements and cleavage as well as targeted degradation of pre-ribosomal RNA by the RNA exosome. The polypeptide is Dimethyladenosine transferase (Homo sapiens (Human)).